Consider the following 543-residue polypeptide: Chaperonin GroEL (543 aa).

ATP contacts are provided by residues 29–32, 86–90, G413, 478–480, and D494; these read TLGP, DGTTT, and NAA.

This sequence belongs to the chaperonin (HSP60) family. In terms of assembly, forms a cylinder of 14 subunits composed of two heptameric rings stacked back-to-back. Interacts with the co-chaperonin GroES.

It is found in the cytoplasm. It carries out the reaction ATP + H2O + a folded polypeptide = ADP + phosphate + an unfolded polypeptide.. Together with its co-chaperonin GroES, plays an essential role in assisting protein folding. The GroEL-GroES system forms a nano-cage that allows encapsulation of the non-native substrate proteins and provides a physical environment optimized to promote and accelerate protein folding. This is Chaperonin GroEL from Lactobacillus johnsonii (strain CNCM I-12250 / La1 / NCC 533).